The sequence spans 223 residues: UPF0758 protein Tgr7_0100 (223 aa).

In terms of domain architecture, MPN spans 102-223 (ALTSPDDTRR…LVSFAERGLL (122 aa)). Zn(2+)-binding residues include His-173, His-175, and Asp-186. Residues 173–186 (HNHPSGVAEPSRSD) carry the JAMM motif motif.

The protein belongs to the UPF0758 family.

The protein is UPF0758 protein Tgr7_0100 of Thioalkalivibrio sulfidiphilus (strain HL-EbGR7).